The sequence spans 221 residues: MSTNQEFNLLSNRFRTFYPVVIDIETAGFNANTDAVLEIAIITLKMDELGWLHKEDTLHFHIEPFKGSIINSDAIAFNKIDPFNPLRGAISEKIAIQSILKKVRNGIKIQGCSRGIVVAHNANFDHNFLMAAIQRVKIKNNPFHPFATFDTAALSGLVVGQTVLSKACKAIGLSFDNHQAHSALYDTLQTANLFCELVNRWKRLGGWPVDIKKNNSTSNKY.

Residues 20–194 form the Exonuclease domain; the sequence is VVIDIETAGF…YDTLQTANLF (175 aa). Mg(2+)-binding residues include aspartate 23, glutamate 25, histidine 181, and aspartate 186. Residue histidine 181 is the Proton donor/acceptor of the active site.

It belongs to the RNase T family. In terms of assembly, homodimer. The cofactor is Mg(2+).

Trims short 3' overhangs of a variety of RNA species, leaving a one or two nucleotide 3' overhang. Responsible for the end-turnover of tRNA: specifically removes the terminal AMP residue from uncharged tRNA (tRNA-C-C-A). Also appears to be involved in tRNA biosynthesis. The sequence is that of Ribonuclease T from Buchnera aphidicola subsp. Acyrthosiphon pisum (strain APS) (Acyrthosiphon pisum symbiotic bacterium).